The primary structure comprises 167 residues: Probable chemoreceptor glutamine deamidase CheD (167 aa).

Belongs to the CheD family.

It catalyses the reaction L-glutaminyl-[protein] + H2O = L-glutamyl-[protein] + NH4(+). In terms of biological role, probably deamidates glutamine residues to glutamate on methyl-accepting chemotaxis receptors (MCPs), playing an important role in chemotaxis. This is Probable chemoreceptor glutamine deamidase CheD from Moorella thermoacetica (strain ATCC 39073 / JCM 9320).